The chain runs to 462 residues: uncharacterized protein (462 aa).

2 consecutive transmembrane segments (helical) span residues 12–32 and 257–277; these read WWWL…APTV and GLCV…LELV.

This sequence belongs to the HHV-5 US29 protein family.

The protein localises to the host membrane. This is an uncharacterized protein from Homo sapiens (Human).